A 210-amino-acid chain; its full sequence is Ribosomal RNA large subunit methyltransferase E (210 aa).

S-adenosyl-L-methionine contacts are provided by Gly60, Trp62, Asp85, Asp101, and Asp126. Lys166 acts as the Proton acceptor in catalysis.

This sequence belongs to the class I-like SAM-binding methyltransferase superfamily. RNA methyltransferase RlmE family.

Its subcellular location is the cytoplasm. It carries out the reaction uridine(2552) in 23S rRNA + S-adenosyl-L-methionine = 2'-O-methyluridine(2552) in 23S rRNA + S-adenosyl-L-homocysteine + H(+). Its function is as follows. Specifically methylates the uridine in position 2552 of 23S rRNA at the 2'-O position of the ribose in the fully assembled 50S ribosomal subunit. The protein is Ribosomal RNA large subunit methyltransferase E of Bordetella pertussis (strain Tohama I / ATCC BAA-589 / NCTC 13251).